The following is a 163-amino-acid chain: Epithelial membrane protein 3 (163 aa).

The helical transmembrane segment at 4–24 (LLLVVSALHILILILLFVATL) threads the bilayer. N-linked (GlcNAc...) asparagine glycosylation is found at asparagine 47 and asparagine 56. 3 consecutive transmembrane segments (helical) span residues 66 to 86 (VQVL…LFMF), 100 to 120 (TGLC…IYAI), and 139 to 159 (FALA…YIHL).

The protein belongs to the PMP-22/EMP/MP20 family.

The protein localises to the membrane. Its function is as follows. Probably involved in cell proliferation and cell-cell interactions. In Homo sapiens (Human), this protein is Epithelial membrane protein 3 (EMP3).